Here is a 1010-residue protein sequence, read N- to C-terminus: Sodium/potassium-transporting ATPase subunit alpha-3 (1010 aa).

The segment at 1-21 (MGDKGEKESPKKGKGKRDLDD) is disordered. The Cytoplasmic segment spans residues 1-74 (MGDKGEKESP…NALTPPPTTP (74 aa)). An interaction with phosphoinositide-3 kinase region spans residues 69-71 (PPP). Residues 75–95 (EWVKFCRQLFGGFSILLWIGA) form a helical membrane-spanning segment. Residues 96–118 (ILCFLAYGIQAGTEDEPSNDNLY) lie on the Extracellular side of the membrane. The chain crosses the membrane as a helical span at residues 119 to 139 (LGIVLAAVVIITGCFSYYQEA). Topologically, residues 140–275 (KSSKIMESFK…VGKTPIAVEI (136 aa)) are cytoplasmic. A helical membrane pass occupies residues 276-295 (EHFIQLITGVAVFLGISFFV). Topologically, residues 296–307 (LSLILGYTWLEA) are extracellular. The chain crosses the membrane as a helical span at residues 308 to 325 (VIFLIGIIVANVPEGLLA). The Cytoplasmic segment spans residues 326–759 (TVTVCLTLTA…EEGRLIFDNL (434 aa)). The 4-aspartylphosphate intermediate role is filled by D363. The Mg(2+) site is built by D704 and D708. The helical transmembrane segment at 760–779 (KKSIAYTLTSNIPEITPFLL) threads the bilayer. Residues 780–789 (FIMANIPLPL) are Extracellular-facing. The chain crosses the membrane as a helical span at residues 790–810 (GTITILCIDLGTDMVPAISLA). Over 811–830 (YEAAESDIMKRQPRNPRSDK) the chain is Cytoplasmic. A helical transmembrane segment spans residues 831 to 853 (LVNERLISMAYGQIGMIQALGGF). Residues 854-905 (FSYFVILAENGFLPSCLVGIRLSWDDRTINDLEDSYGQQWTYEQRKVVEFTC) lie on the Extracellular side of the membrane. Residues 906 to 925 (HTAFFVSIVVVQWADLIICK) form a helical membrane-spanning segment. The Cytoplasmic portion of the chain corresponds to 926-938 (TRRNSVFQQGMKN). S930 carries the phosphoserine; by PKA modification. A helical transmembrane segment spans residues 939–957 (KILIFGLFEETALAAFLSY). Residues 958–972 (CPGMDVALRMYPLKP) lie on the Extracellular side of the membrane. A helical transmembrane segment spans residues 973-993 (SWWFCAFPYSFLIFVYDEIRK). The Cytoplasmic segment spans residues 994 to 1010 (LILRRNPGGWVEKETYY).

It belongs to the cation transport ATPase (P-type) (TC 3.A.3) family. Type IIC subfamily. The sodium/potassium-transporting ATPase is composed of a catalytic alpha subunit, an auxiliary non-catalytic beta subunit and an additional regulatory subunit.

Its subcellular location is the cell membrane. The enzyme catalyses K(+)(out) + Na(+)(in) + ATP + H2O = K(+)(in) + Na(+)(out) + ADP + phosphate + H(+). Functionally, this is the catalytic component of the active enzyme, which catalyzes the hydrolysis of ATP coupled with the exchange of sodium and potassium ions across the plasma membrane. This action creates the electrochemical gradient of sodium and potassium ions, providing the energy for active transport of various nutrients. This Gallus gallus (Chicken) protein is Sodium/potassium-transporting ATPase subunit alpha-3 (ATP1A3).